The chain runs to 487 residues: Solute carrier family 22 member 15-like (487 aa).

Residues 23–43 traverse the membrane as a helical segment; sequence FLTLLQIYVACQSMLIVLVGA. A glycan (N-linked (GlcNAc...) asparagine) is linked at Asn-70. 11 consecutive transmembrane segments (helical) span residues 90–110, 117–137, 141–161, 178–198, 203–223, 286–306, 315–335, 345–365, 374–394, 408–428, and 435–455; these read LASS…GPLS, PVYL…ALAP, VFAV…LVSF, SLTN…GFYI, TLAF…FVLP, ILLM…TLNA, LNVA…LYFI, ATAG…FVPE, TVLA…VYIY, LGVC…IPAM, and MPFV…LLLP.

This sequence belongs to the major facilitator (TC 2.A.1) superfamily. Organic cation transporter (TC 2.A.1.19) family.

Its subcellular location is the membrane. Its function is as follows. Probably transports organic cations. The polypeptide is Solute carrier family 22 member 15-like (slc22a15b) (Xenopus laevis (African clawed frog)).